The following is a 316-amino-acid chain: MKWREIAITTRQENADAMAEIFEAVGAMGMVIEDPQLIASYIESNVWDLHDVEIPDVPEGMIRVKTYLAIDNTLEERLAALQEELSARERSEKWPAHAWTMTDLHEDDWAHAWKAFFKPEKVGRRVVIRPTWEEYVPKEDDLVISIDPGMAFGTGTHPTTVMCIRALEDYVHAEAHVLDVGTGSGVLSIAAALLGAKRVLAVDNDPVAVATAQENVILNQVDEIVEVRRNDLLSGLSEQADILVANIIADVIIRLAPQAAALLAPEGIMIASGIIQNRLDDVVAAMTEKGFSIEELISHGEWAAIVARRAGVSAEG.

S-adenosyl-L-methionine is bound by residues threonine 160, glycine 181, aspartate 203, and asparagine 246.

Belongs to the methyltransferase superfamily. PrmA family.

Its subcellular location is the cytoplasm. It catalyses the reaction L-lysyl-[protein] + 3 S-adenosyl-L-methionine = N(6),N(6),N(6)-trimethyl-L-lysyl-[protein] + 3 S-adenosyl-L-homocysteine + 3 H(+). In terms of biological role, methylates ribosomal protein L11. The polypeptide is Ribosomal protein L11 methyltransferase (Heliobacterium modesticaldum (strain ATCC 51547 / Ice1)).